The chain runs to 669 residues: Dymeclin (669 aa).

Gly2 carries N-myristoyl glycine lipidation.

This sequence belongs to the dymeclin family. As to quaternary structure, interacts with GOLM1 and PPIB. Myristoylated in vitro; myristoylation is not essential for protein targeting to Golgi compartment.

The protein localises to the cytoplasm. It is found in the golgi apparatus. The protein resides in the membrane. Its function is as follows. Necessary for correct organization of Golgi apparatus. Involved in bone development. The protein is Dymeclin (Dym) of Mus musculus (Mouse).